Here is a 1293-residue protein sequence, read N- to C-terminus: Receptor-type tyrosine-protein phosphatase C (1293 aa).

An N-terminal signal peptide occupies residues 1–25 (MTMGLWLKLLAFGFALLDTEVFVTG). The Extracellular segment spans residues 26–566 (QTPTPSDELS…RNESTNFNAK (541 aa)). The disordered stretch occupies residues 43–174 (LPQSDPLPAR…STTDISSGAS (132 aa)). Polar residues-rich tracts occupy residues 53–72 (TTES…SETT), 88–110 (QPDS…QADN), and 149–169 (LARN…TTDI). The N-linked (GlcNAc...) asparagine glycan is linked to asparagine 66. N-linked (GlcNAc...) asparagine glycosylation is found at asparagine 152, asparagine 163, asparagine 209, asparagine 213, asparagine 220, asparagine 255, asparagine 260, asparagine 292, asparagine 313, asparagine 324, asparagine 349, asparagine 418, asparagine 429, asparagine 459, and asparagine 491. Fibronectin type-III domains are found at residues 376–472 (IPET…TKAD) and 473–568 (RPDK…AKAL). Residues 567-588 (ALIIFLVFLIIVTSIALLVVLY) traverse the membrane as a helical segment. Topologically, residues 589 to 1293 (KIYDLRKKRS…SASPAPTQSS (705 aa)) are cytoplasmic. 2 consecutive Tyrosine-protein phosphatase domains span residues 642–901 (FLAE…LVEY) and 933–1216 (LEAE…IASI). Tyrosine 672 bears the Phosphotyrosine mark. Substrate-binding positions include aspartate 810, 842-848 (CSAGVGR), and glutamine 886. Cysteine 842 functions as the Phosphocysteine intermediate in the catalytic mechanism. A phosphoserine mark is found at serine 964, serine 983, serine 986, serine 990, serine 993, serine 994, and serine 998. Residues 980–1003 (LEMSKESEPESDESSDDDSDSEET) form a disordered region. Acidic residues predominate over residues 988–1001 (PESDESSDDDSDSE). Cysteine 1157 functions as the Phosphocysteine intermediate in the catalytic mechanism. Serine 1229 carries the post-translational modification Phosphoserine. The interval 1240–1293 (DGGKQDANCVRPDGPLNKAQEDSRGVGTPEPTNSAEEPEHAANGSASPAPTQSS) is disordered. Position 1267 is a phosphothreonine (threonine 1267). Residues 1283–1293 (GSASPAPTQSS) are compositionally biased toward polar residues. A Phosphoserine modification is found at serine 1286.

It belongs to the protein-tyrosine phosphatase family. Receptor class 1/6 subfamily. In terms of assembly, interacts with SKAP1. Interacts with DPP4; the interaction is enhanced in an interleukin-12-dependent manner in activated lymphocytes. Binds GANAB and PRKCSH. Interacts with CD53; this interaction stabilizes PTPRC on the membrane and is required for optimal phosphatase activity. Interacts with CLEC10A. Heavily N- and O-glycosylated.

It localises to the cell membrane. Its subcellular location is the membrane raft. The protein localises to the synapse. It carries out the reaction O-phospho-L-tyrosyl-[protein] + H2O = L-tyrosyl-[protein] + phosphate. Its function is as follows. Protein tyrosine-protein phosphatase required for T-cell activation through the antigen receptor. Acts as a positive regulator of T-cell coactivation upon binding to DPP4. The first PTPase domain has enzymatic activity, while the second one seems to affect the substrate specificity of the first one. Upon T-cell activation, recruits and dephosphorylates SKAP1 and FYN. Dephosphorylates LYN, and thereby modulates LYN activity. Interacts with CLEC10A at antigen presenting cell-T cell contact; CLEC10A on immature dendritic cells recognizes Tn antigen-carrying PTPRC/CD45 receptor on effector T cells and modulates T cell activation threshold to limit autoreactivity. The protein is Receptor-type tyrosine-protein phosphatase C of Mus musculus (Mouse).